A 58-amino-acid polypeptide reads, in one-letter code: Large ribosomal subunit protein bL32c (58 aa).

The disordered stretch occupies residues 1-23; it reads MAVPKKRTSKAKKNARKSVWKKK.

The protein belongs to the bacterial ribosomal protein bL32 family.

The protein localises to the plastid. Its subcellular location is the chloroplast. The chain is Large ribosomal subunit protein bL32c (rpl32-A) from Trieres chinensis (Marine centric diatom).